We begin with the raw amino-acid sequence, 267 residues long: Levodione reductase (267 aa).

17–42 (LITGGGSGLGRATAVRLAAEGAKLSL) lines the NAD(+) pocket. Ser-152 is a substrate binding site. The active-site Proton acceptor is Tyr-165.

The protein belongs to the short-chain dehydrogenases/reductases (SDR) family.

It carries out the reaction (4R)-hydroxy-(6R)-2,2,6-trimethylcyclohexanone + NAD(+) = (6R)-2,2,6-trimethyl-1,4-cyclohexanedione + NADH + H(+). Strongly activated by monovalent cations, such as K(+), Na(+), and NH4(+). Catalyzes the regio- and stereoselective reversible NAD-dependent reduction of (6R)-2,2,6-trimethyl-1,4-cyclohexanedione (levodione) to (4R,6R)-4-hydroxy-2,2,6-trimethylcyclohexanone (actinol). The protein is Levodione reductase (lvr) of Leifsonia aquatica (Corynebacterium aquaticum).